Reading from the N-terminus, the 247-residue chain is Carboxy-S-adenosyl-L-methionine synthase (247 aa).

S-adenosyl-L-methionine is bound by residues Tyr40, 65 to 67 (GAS), 90 to 91 (DN), 122 to 123 (DI), Asn137, and Arg204.

It belongs to the class I-like SAM-binding methyltransferase superfamily. Cx-SAM synthase family. In terms of assembly, homodimer.

It carries out the reaction prephenate + S-adenosyl-L-methionine = carboxy-S-adenosyl-L-methionine + 3-phenylpyruvate + H2O. Functionally, catalyzes the conversion of S-adenosyl-L-methionine (SAM) to carboxy-S-adenosyl-L-methionine (Cx-SAM). This chain is Carboxy-S-adenosyl-L-methionine synthase, found in Pseudomonas putida (strain GB-1).